A 120-amino-acid chain; its full sequence is Large ribosomal subunit protein uL18 (120 aa).

It belongs to the universal ribosomal protein uL18 family. As to quaternary structure, part of the 50S ribosomal subunit; part of the 5S rRNA/L5/L18/L25 subcomplex. Contacts the 5S and 23S rRNAs.

In terms of biological role, this is one of the proteins that bind and probably mediate the attachment of the 5S RNA into the large ribosomal subunit, where it forms part of the central protuberance. The protein is Large ribosomal subunit protein uL18 of Gluconacetobacter diazotrophicus (strain ATCC 49037 / DSM 5601 / CCUG 37298 / CIP 103539 / LMG 7603 / PAl5).